We begin with the raw amino-acid sequence, 521 residues long: Glutamate--cysteine ligase (521 aa).

The protein belongs to the glutamate--cysteine ligase type 1 family. Type 1 subfamily.

It catalyses the reaction L-cysteine + L-glutamate + ATP = gamma-L-glutamyl-L-cysteine + ADP + phosphate + H(+). It functions in the pathway sulfur metabolism; glutathione biosynthesis; glutathione from L-cysteine and L-glutamate: step 1/2. This Aliivibrio fischeri (strain MJ11) (Vibrio fischeri) protein is Glutamate--cysteine ligase.